A 267-amino-acid polypeptide reads, in one-letter code: Proteasome subunit alpha (267 aa).

Residues 231-267 (ETLLQERDSKESAESEEPIESEEGKKTGKKSDADSSD) form a disordered region. Composition is skewed to basic and acidic residues over residues 234 to 243 (LQERDSKESA) and 252 to 267 (EEGK…DSSD).

Belongs to the peptidase T1A family. The 20S proteasome core is composed of 14 alpha and 14 beta subunits that assemble into four stacked heptameric rings, resulting in a barrel-shaped structure. The two inner rings, each composed of seven catalytic beta subunits, are sandwiched by two outer rings, each composed of seven alpha subunits. The catalytic chamber with the active sites is on the inside of the barrel. Has a gated structure, the ends of the cylinder being occluded by the N-termini of the alpha-subunits. Is capped by the proteasome-associated ATPase, ARC.

Its subcellular location is the cytoplasm. It participates in protein degradation; proteasomal Pup-dependent pathway. With respect to regulation, the formation of the proteasomal ATPase ARC-20S proteasome complex, likely via the docking of the C-termini of ARC into the intersubunit pockets in the alpha-rings, may trigger opening of the gate for substrate entry. Interconversion between the open-gate and close-gate conformations leads to a dynamic regulation of the 20S proteasome proteolysis activity. In terms of biological role, component of the proteasome core, a large protease complex with broad specificity involved in protein degradation. The protein is Proteasome subunit alpha of Mycobacterium ulcerans (strain Agy99).